We begin with the raw amino-acid sequence, 276 residues long: MLTINLPKTFKVKYLLIALALFYLILVLLLPAIAVFYEAFHKGVEPFIQAMGDRNFQSALQLTVVMALISVPLNTVFGLCAAWVLARNQFPGRALFLSVLDLPFSISPVVAGLMIVLLYGKNGWIGSWFASWDIQIIFSVPGMAIATIFVTLPFVAREVIPVLEELGPEQEEAARTLGAKDWQIFWRVTLPNIRWGLLYGVLLTNARAMGEFGAVAVVSGSILGKTSTLPIFVEQEYKNYQTEAAFGAAVVLALLAVVTLVLKEILEQRTGHHKAV.

The next 6 helical transmembrane spans lie at 16-36, 64-84, 99-119, 136-156, 212-232, and 242-262; these read LIALALFYLILVLLLPAIAVF, VVMALISVPLNTVFGLCAAWV, VLDLPFSISPVVAGLMIVLLY, IIFSVPGMAIATIFVTLPFVA, FGAVAVVSGSILGKTSTLPIF, and TEAAFGAAVVLALLAVVTLVL. In terms of domain architecture, ABC transmembrane type-1 spans 60–267; that stretch reads LQLTVVMALI…VTLVLKEILE (208 aa).

It belongs to the binding-protein-dependent transport system permease family. CysTW subfamily. As to quaternary structure, the complex is composed of two ATP-binding proteins (CysA), two transmembrane proteins (CysT and CysW) and a solute-binding protein (CysP).

Its subcellular location is the cell inner membrane. Functionally, part of the ABC transporter complex CysAWTP (TC 3.A.1.6.1) involved in sulfate/thiosulfate import. Probably responsible for the translocation of the substrate across the membrane. The chain is Sulfate transport system permease protein CysW (cysW) from Synechocystis sp. (strain ATCC 27184 / PCC 6803 / Kazusa).